The chain runs to 853 residues: DNA mismatch repair protein MutS (853 aa).

Residue 613–620 (GPNMGGKS) participates in ATP binding.

It belongs to the DNA mismatch repair MutS family.

Its function is as follows. This protein is involved in the repair of mismatches in DNA. It is possible that it carries out the mismatch recognition step. This protein has a weak ATPase activity. The chain is DNA mismatch repair protein MutS from Vibrio campbellii (strain ATCC BAA-1116).